The primary structure comprises 489 residues: Glycogen synthase (489 aa).

Lys18 provides a ligand contact to ADP-alpha-D-glucose.

The protein belongs to the glycosyltransferase 1 family. Bacterial/plant glycogen synthase subfamily.

The catalysed reaction is [(1-&gt;4)-alpha-D-glucosyl](n) + ADP-alpha-D-glucose = [(1-&gt;4)-alpha-D-glucosyl](n+1) + ADP + H(+). The protein operates within glycan biosynthesis; glycogen biosynthesis. In terms of biological role, synthesizes alpha-1,4-glucan chains using ADP-glucose. This chain is Glycogen synthase, found in Rhodopseudomonas palustris (strain BisB18).